A 96-amino-acid chain; its full sequence is Myticin-B (96 aa).

A signal peptide spans 1-20 (MKATMLLAVVVAVFVAGTEA). The propeptide at 61–96 (VKFPFGATQDAKSMNELEYTPIMKSMENLDNGMDML) is removed in mature form.

In terms of processing, contains four disulfide bonds. In terms of tissue distribution, hemocytes.

The protein localises to the secreted. Its function is as follows. Bacteriolytic activity against Gram-positive bacteria M.luteus, B.megaterium and A.viridans and Gram-negative bacteria E.coli D31. Possesses antifungal activity against F.oxysporum. The protein is Myticin-B of Mytilus galloprovincialis (Mediterranean mussel).